The primary structure comprises 414 residues: Enterobactin exporter EntS (414 aa).

Residues M1–A21 lie on the Cytoplasmic side of the membrane. The chain crosses the membrane as a helical span at residues V22 to V42. Residues Q43 to G55 are Periplasmic-facing. The chain crosses the membrane as a helical span at residues L56 to A76. The Cytoplasmic portion of the chain corresponds to D77–K83. The helical transmembrane segment at V84 to L104 threads the bilayer. The Periplasmic segment spans residues L105–S109. A helical membrane pass occupies residues L110–A130. Residues L131–R156 lie on the Cytoplasmic side of the membrane. The helical transmembrane segment at L157 to W177 threads the bilayer. Position 178 (N178) is a topological domain, periplasmic. The chain crosses the membrane as a helical span at residues Y179 to L199. Residues P200–R218 are Cytoplasmic-facing. Residues F219–A239 form a helical membrane-spanning segment. The Periplasmic segment spans residues S240–S256. Residues A257 to T277 traverse the membrane as a helical segment. The Cytoplasmic segment spans residues S278–P287. A helical transmembrane segment spans residues G288 to I307. At M308–A313 the chain is on the periplasmic side. The helical transmembrane segment at G314 to L336 threads the bilayer. The Cytoplasmic segment spans residues Q337 to N356. A helical transmembrane segment spans residues V357 to V377. A378 is a topological domain (periplasmic). The helical transmembrane segment at S379–G399 threads the bilayer. Over E400–G414 the chain is Cytoplasmic.

The protein belongs to the major facilitator superfamily. EntS (TC 2.A.1.38) family.

It is found in the cell inner membrane. In terms of biological role, component of an export pathway for enterobactin. The polypeptide is Enterobactin exporter EntS (Salmonella typhi).